The following is a 49-amino-acid chain: Large ribosomal subunit protein bL33A (49 aa).

This sequence belongs to the bacterial ribosomal protein bL33 family.

This chain is Large ribosomal subunit protein bL33A, found in Bacillus pumilus (strain SAFR-032).